A 46-amino-acid polypeptide reads, in one-letter code: Phoratoxin (46 aa).

3 cysteine pairs are disulfide-bonded: Cys3–Cys40, Cys4–Cys32, and Cys16–Cys26. The residue at position 46 (His46) is a Blocked carboxyl end (His).

This sequence belongs to the plant thionin (TC 1.C.44) family.

Its subcellular location is the secreted. Thionins are small plant proteins which are toxic to animal cells. They seem to exert their toxic effect at the level of the cell membrane. Their precise function is not known. The protein is Phoratoxin of Phoradendron leucarpum subsp. tomentosum (California mistletoe).